A 596-amino-acid polypeptide reads, in one-letter code: Pheromone-processing carboxypeptidase KEX1 (596 aa).

Residues 1–17 (MLGLATTVTLESSGCSS) form the signal peptide. At 18–486 (KMCFRLLCSV…KIAAWEAYYK (469 aa)) the chain is on the lumenal side. N-linked (GlcNAc...) asparagine glycosylation is found at Asn54 and Asn90. Ser154 is a catalytic residue. 6 N-linked (GlcNAc...) asparagine glycosylation sites follow: Asn177, Asn367, Asn372, Asn404, Asn412, and Asn464. The segment at 447 to 469 (SRIDGLKGAPTSVGAHPNSTTAE) is disordered. The chain crosses the membrane as a helical span at residues 487-507 (SGEVALVVVAIAASLWGFFIW). The Cytoplasmic portion of the chain corresponds to 508–596 (RSKRREKGLE…QSHAGMGKSR (89 aa)). The tract at residues 539–596 (KRRGRMDVESAPRPDEAELETLYNAAEGSDPQDGEENFSDGKGDNEKAQSHAGMGKSR) is disordered. Basic and acidic residues-rich tracts occupy residues 543–554 (RMDVESAPRPDE) and 577–587 (SDGKGDNEKAQ).

This sequence belongs to the peptidase S10 family.

It is found in the golgi apparatus. Its subcellular location is the trans-Golgi network membrane. It carries out the reaction Preferential release of a C-terminal arginine or lysine residue.. Protease with a carboxypeptidase B-like function involved in the C-terminal processing of the lysine and arginine residues from protein precursors. Promotes cell fusion and is involved in the programmed cell death. The chain is Pheromone-processing carboxypeptidase KEX1 (KEX1) from Arthroderma benhamiae (strain ATCC MYA-4681 / CBS 112371) (Trichophyton mentagrophytes).